The sequence spans 28 residues: 3-phytase B (28 aa).

The segment at 1–28 (RDPTGCEVDQVIMVKRHGERYPSPSAGK) is disordered. The Nucleophile role is filled by His17.

It belongs to the histidine acid phosphatase family.

The enzyme catalyses 1D-myo-inositol hexakisphosphate + H2O = 1D-myo-inositol 1,2,4,5,6-pentakisphosphate + phosphate. Its function is as follows. Catalyzes the hydrolysis of inorganic orthophosphate from phytate. The polypeptide is 3-phytase B (phyB) (Aspergillus ficuum).